A 73-amino-acid polypeptide reads, in one-letter code: Toxin Td10 (73 aa).

The N-terminal stretch at I1–C7 is a signal peptide. The LCN-type CS-alpha/beta domain maps to K8–G70. 4 disulfide bridges follow: C18–C69, C22–C44, C30–C50, and C34–C52. K71 is modified (lysine amide).

Belongs to the long (4 C-C) scorpion toxin superfamily. Sodium channel inhibitor family. Beta subfamily. Expressed by the venom gland.

The protein resides in the secreted. Functionally, beta toxins bind voltage-independently at site-4 of sodium channels (Nav) and shift the voltage of activation toward more negative potentials thereby affecting sodium channel activation and promoting spontaneous and repetitive firing. This Tityus discrepans (Venezuelan scorpion) protein is Toxin Td10.